The primary structure comprises 640 residues: Protein UL35 (640 aa).

Disordered stretches follow at residues 353–373 (ERGEFGDEDEEQENDGEPREA), 500–571 (ASSS…PRQR), and 586–640 (AYSH…LRHL). Residues 358–367 (GDEDEEQEND) are compositionally biased toward acidic residues. The span at 500-562 (ASSSSASSSS…LSGSHGISSA (63 aa)) shows a compositional bias: low complexity. Positions 588–598 (SHHRRHRRRRS) are enriched in basic residues. Positions 631–640 (DDLAENLRHL) are enriched in basic and acidic residues.

The protein belongs to the herpesviridae pp85 family. As to quaternary structure, interacts with UL82. Interacts with isoform UL35A. Interacts with host UBP7; this interaction significantly inhibits the ability of USP7 to form nuclear bodies. Interacts with host DCAF1 (via C-terminus). Interacts with host SNX5; this interaction allows proper gB localization during viral assembly. Interacts with host TBK1; this interaction prevents type I interferon production. In terms of assembly, interacts with UL82. Interacts with isoform UL35. Interacts with host UBP7; this interaction significantly inhibits the ability of USP7 to form nuclear bodies. Interacts with host SNX5; this interaction allows proper gB localization during viral assembly.

It localises to the virion tegument. It is found in the host nucleus. Its subcellular location is the host cytoplasm. Its function is as follows. Plays important role in immediate-early gene expression through interaction with UL82. Forms nuclear bodies in host nucleus, independently of PML. In turn, UL35 nuclear bodies associate with and remodel PML bodies. Through interaction with host DCAF1, causes cells to accumulate in the G2 phase of the cell cycle by inducing a DNA damage response. Regulates viral assembly by controlling the localization of the essential gB through regulation of a retrograde transport pathway. This modulation occurs via binding and inhibition of host sorting nexin 5/SNX5. Also plays a role in the inhibition of pattern recognition receptor-mediated type I interferon signaling at the level of TBK1. In terms of biological role, promotes cytoplasmic UL82 accumulation and inhibits UL35-containing nuclear bodies formation. Regulates viral assembly by controlling the localization of the essential gB through regulation of a retrograde transport pathway. This modulation occurs via binding and inhibition of host sorting nexin 5/SNX5. The polypeptide is Protein UL35 (UL35) (Homo sapiens (Human)).